The following is a 390-amino-acid chain: Putative nickel insertion protein (390 aa).

It belongs to the LarC family.

The polypeptide is Putative nickel insertion protein (Geotalea daltonii (strain DSM 22248 / JCM 15807 / FRC-32) (Geobacter daltonii)).